The chain runs to 275 residues: Large ribosomal subunit protein uL2 (275 aa).

The disordered stretch occupies residues 223–260 (VAMNPVDHPHGGGEGRTSGGRHPVSPWGLPTKGYKTRS).

It belongs to the universal ribosomal protein uL2 family. In terms of assembly, part of the 50S ribosomal subunit. Forms a bridge to the 30S subunit in the 70S ribosome.

One of the primary rRNA binding proteins. Required for association of the 30S and 50S subunits to form the 70S ribosome, for tRNA binding and peptide bond formation. It has been suggested to have peptidyltransferase activity; this is somewhat controversial. Makes several contacts with the 16S rRNA in the 70S ribosome. The protein is Large ribosomal subunit protein uL2 of Legionella pneumophila (strain Paris).